Reading from the N-terminus, the 236-residue chain is UPF0257 lipoprotein YnfC (236 aa).

An N-terminal signal peptide occupies residues 1–16 (MKYKLLPCLLAILLTG). Cys-17 is lipidated: N-palmitoyl cysteine. Cys-17 carries the S-diacylglycerol cysteine lipid modification.

Belongs to the UPF0257 family.

Its subcellular location is the cell membrane. The protein is UPF0257 lipoprotein YnfC of Escherichia coli O81 (strain ED1a).